Here is a 143-residue protein sequence, read N- to C-terminus: uncharacterized protein (143 aa).

The disordered stretch occupies residues 1 to 143; sequence MRSSRQKASI…WFSQTVKRKA (143 aa). Composition is skewed to basic and acidic residues over residues 34 to 46 and 61 to 76; these read ISAE…KHLD and EYQK…RKIV. Composition is skewed to acidic residues over residues 77-93 and 103-115; these read DDEE…PEEE and YEEE…PDLA.

This is an uncharacterized protein from Bacillus subtilis (strain 168).